The following is a 550-amino-acid chain: Chaperonin GroEL (550 aa).

ATP-binding positions include 30-33 (TLGP), Lys51, 87-91 (DGTTT), Gly415, 479-481 (NAA), and Asp495.

It belongs to the chaperonin (HSP60) family. As to quaternary structure, forms a cylinder of 14 subunits composed of two heptameric rings stacked back-to-back. Interacts with the co-chaperonin GroES.

It is found in the cytoplasm. The catalysed reaction is ATP + H2O + a folded polypeptide = ADP + phosphate + an unfolded polypeptide.. Functionally, together with its co-chaperonin GroES, plays an essential role in assisting protein folding. The GroEL-GroES system forms a nano-cage that allows encapsulation of the non-native substrate proteins and provides a physical environment optimized to promote and accelerate protein folding. This chain is Chaperonin GroEL, found in Polynucleobacter asymbioticus (strain DSM 18221 / CIP 109841 / QLW-P1DMWA-1) (Polynucleobacter necessarius subsp. asymbioticus).